A 442-amino-acid chain; its full sequence is Zuotin (442 aa).

The disordered stretch occupies residues 49–84 (RQRHGRTFSEDERLEVKNKVQEEVKEESEDEEEDPA). T55 is subject to Phosphothreonine. Basic and acidic residues predominate over residues 55–71 (TFSEDERLEVKNKVQEE). S57 and S76 each carry phosphoserine. The segment covering 72–83 (VKEESEDEEEDP) has biased composition (acidic residues). The J domain occupies 97–167 (DHYAVLGLSK…VRRRQFDSVD (71 aa)). 2 disordered regions span residues 242–270 (DGESRDNKRFQEKKNRSERQKNKARDNAR) and 306–331 (GAREAAAAAQKKKEEEERRAAEEAAA). Residues 316–330 (KKKEEEERRAAEEAA) are compositionally biased toward basic and acidic residues.

In terms of assembly, RAC is a heterodimer of the Hsp70/DnaK-type chaperone ssz1 and the Hsp40/DnaJ-type chaperone zuo1. RAC associates with ribosomes via zuo1.

The protein resides in the cytoplasm. Functionally, component of the ribosome-associated complex (RAC), a heterodimeric chaperone complex involved in regulation of accurate translation termination and in folding or maintaining nascent polypeptides in a folding-competent state. RAC stimulates the ATPase activity of the ribosome-associated pool of Hsp70-type chaperones SSB1/SSB2 that bind to the nascent polypeptide chain. This is Zuotin (zuo1) from Schizosaccharomyces pombe (strain 972 / ATCC 24843) (Fission yeast).